A 317-amino-acid chain; its full sequence is Brain-specific serine protease 4 (317 aa).

A signal peptide spans 1–32 (MVVSGAPPALGGGCLGTFTSLLLLASTAILNA). In terms of domain architecture, Peptidase S1 spans 50-290 (VVGGEDSTDS…HRSWVEKIVQ (241 aa)). N-linked (GlcNAc...) asparagine glycosylation is present at Asn-70. Cys-75 and Cys-91 are oxidised to a cystine. Residues His-90 and Asp-141 each act as charge relay system in the active site. Cystine bridges form between Cys-175–Cys-248, Cys-208–Cys-227, and Cys-238–Cys-266. The active-site Charge relay system is Ser-242.

This sequence belongs to the peptidase S1 family. Expressed abundantly in the epithelial cells of the airways, including trachea, esophagus and fetal lung. Scarce in adult lung. Expressed at low levels in placenta, pancreas, prostate and thyroid gland.

The protein resides in the secreted. Preferentially cleaves the synthetic substrate H-D-Leu-Thr-Arg-pNA compared to tosyl-Gly-Pro-Arg-pNA. This is Brain-specific serine protease 4 (PRSS22) from Homo sapiens (Human).